The chain runs to 163 residues: Deoxyuridine 5'-triphosphate nucleotidohydrolase (163 aa).

It belongs to the dUTPase family. Requires Mg(2+) as cofactor.

It carries out the reaction dUTP + H2O = dUMP + diphosphate + H(+). Its pathway is pyrimidine metabolism; dUMP biosynthesis; dUMP from dCTP (dUTP route): step 2/2. This enzyme is involved in nucleotide metabolism: it produces dUMP, the immediate precursor of thymidine nucleotides and it decreases the intracellular concentration of dUTP so that uracil cannot be incorporated into DNA. This is Deoxyuridine 5'-triphosphate nucleotidohydrolase from Galliformes (FAdV-8).